The following is a 152-amino-acid chain: Small ribosomal subunit protein uS13 (152 aa).

Belongs to the universal ribosomal protein uS13 family. Component of the small ribosomal subunit.

It is found in the cytoplasm. Functionally, component of the small ribosomal subunit. The ribosome is a large ribonucleoprotein complex responsible for the synthesis of proteins in the cell. Plays an essential role in early embryonic development. The sequence is that of Small ribosomal subunit protein uS13 (rps18) from Danio rerio (Zebrafish).